Consider the following 1025-residue polypeptide: Multidrug resistance protein MdtC (1025 aa).

12 helical membrane passes run 3–23, 333–353, 360–380, 387–407, 431–451, 463–483, 528–548, 853–873, 875–895, 897–917, 953–973, and 984–1004; these read FFAL…AITL, EVEQ…FLFL, IIPA…MYLC, LSLM…IVVL, VGFT…PLLL, FAVT…TLTP, LVGV…ISIP, VILI…LYES, VHPL…LLAL, LFNA…IGIV, PIMM…LSGG, and ITIV…TPVV.

This sequence belongs to the resistance-nodulation-cell division (RND) (TC 2.A.6) family. MdtC subfamily. Part of a tripartite efflux system composed of MdtA, MdtB and MdtC. MdtC forms a heteromultimer with MdtB.

It localises to the cell inner membrane. The MdtABC tripartite complex confers resistance against novobiocin and deoxycholate. The protein is Multidrug resistance protein MdtC of Escherichia coli O139:H28 (strain E24377A / ETEC).